Reading from the N-terminus, the 156-residue chain is Small ribosomal subunit protein uS7 (156 aa).

The protein belongs to the universal ribosomal protein uS7 family. Part of the 30S ribosomal subunit. Contacts proteins S9 and S11.

Functionally, one of the primary rRNA binding proteins, it binds directly to 16S rRNA where it nucleates assembly of the head domain of the 30S subunit. Is located at the subunit interface close to the decoding center, probably blocks exit of the E-site tRNA. In Hyphomonas neptunium (strain ATCC 15444), this protein is Small ribosomal subunit protein uS7.